An 86-amino-acid chain; its full sequence is Large ribosomal subunit protein bL27 (86 aa).

Positions 1–21 (MAHKKAAGSSRNGRDSESKRL) are disordered.

Belongs to the bacterial ribosomal protein bL27 family.

This is Large ribosomal subunit protein bL27 from Hahella chejuensis (strain KCTC 2396).